The chain runs to 485 residues: Glutamyl-tRNA(Gln) amidotransferase subunit A (485 aa).

Residues K78 and S153 each act as charge relay system in the active site. The active-site Acyl-ester intermediate is the S177.

This sequence belongs to the amidase family. GatA subfamily. In terms of assembly, heterotrimer of A, B and C subunits.

The catalysed reaction is L-glutamyl-tRNA(Gln) + L-glutamine + ATP + H2O = L-glutaminyl-tRNA(Gln) + L-glutamate + ADP + phosphate + H(+). Allows the formation of correctly charged Gln-tRNA(Gln) through the transamidation of misacylated Glu-tRNA(Gln) in organisms which lack glutaminyl-tRNA synthetase. The reaction takes place in the presence of glutamine and ATP through an activated gamma-phospho-Glu-tRNA(Gln). The sequence is that of Glutamyl-tRNA(Gln) amidotransferase subunit A from Geobacter sulfurreducens (strain ATCC 51573 / DSM 12127 / PCA).